A 501-amino-acid chain; its full sequence is Probable cytosol aminopeptidase (501 aa).

K272 and D277 together coordinate Mn(2+). K284 is a catalytic residue. 3 residues coordinate Mn(2+): D295, D354, and E356. R358 is a catalytic residue.

Belongs to the peptidase M17 family. Mn(2+) is required as a cofactor.

Its subcellular location is the cytoplasm. The catalysed reaction is Release of an N-terminal amino acid, Xaa-|-Yaa-, in which Xaa is preferably Leu, but may be other amino acids including Pro although not Arg or Lys, and Yaa may be Pro. Amino acid amides and methyl esters are also readily hydrolyzed, but rates on arylamides are exceedingly low.. It catalyses the reaction Release of an N-terminal amino acid, preferentially leucine, but not glutamic or aspartic acids.. Functionally, presumably involved in the processing and regular turnover of intracellular proteins. Catalyzes the removal of unsubstituted N-terminal amino acids from various peptides. The protein is Probable cytosol aminopeptidase of Buchnera aphidicola subsp. Baizongia pistaciae (strain Bp).